Consider the following 302-residue polypeptide: 4-hydroxy-tetrahydrodipicolinate synthase (302 aa).

Position 46 (threonine 46) interacts with pyruvate. The active-site Proton donor/acceptor is tyrosine 134. Residue lysine 162 is the Schiff-base intermediate with substrate of the active site. Isoleucine 204 is a binding site for pyruvate.

This sequence belongs to the DapA family. In terms of assembly, homotetramer; dimer of dimers.

Its subcellular location is the cytoplasm. The enzyme catalyses L-aspartate 4-semialdehyde + pyruvate = (2S,4S)-4-hydroxy-2,3,4,5-tetrahydrodipicolinate + H2O + H(+). It participates in amino-acid biosynthesis; L-lysine biosynthesis via DAP pathway; (S)-tetrahydrodipicolinate from L-aspartate: step 3/4. Catalyzes the condensation of (S)-aspartate-beta-semialdehyde [(S)-ASA] and pyruvate to 4-hydroxy-tetrahydrodipicolinate (HTPA). The chain is 4-hydroxy-tetrahydrodipicolinate synthase from Xanthomonas axonopodis pv. citri (strain 306).